The chain runs to 93 residues: Large ribosomal subunit protein eL31 (93 aa).

The protein belongs to the eukaryotic ribosomal protein eL31 family.

The sequence is that of Large ribosomal subunit protein eL31 from Methanosarcina mazei (strain ATCC BAA-159 / DSM 3647 / Goe1 / Go1 / JCM 11833 / OCM 88) (Methanosarcina frisia).